Here is a 417-residue protein sequence, read N- to C-terminus: Serine--tRNA ligase (417 aa).

232-234 (TAE) is an L-serine binding site. ATP-binding positions include 263-265 (RRE) and V279. E286 contacts L-serine. An ATP-binding site is contributed by 350–353 (EISS). S385 lines the L-serine pocket.

This sequence belongs to the class-II aminoacyl-tRNA synthetase family. Type-1 seryl-tRNA synthetase subfamily. As to quaternary structure, homodimer. The tRNA molecule binds across the dimer.

Its subcellular location is the cytoplasm. It catalyses the reaction tRNA(Ser) + L-serine + ATP = L-seryl-tRNA(Ser) + AMP + diphosphate + H(+). The catalysed reaction is tRNA(Sec) + L-serine + ATP = L-seryl-tRNA(Sec) + AMP + diphosphate + H(+). It participates in aminoacyl-tRNA biosynthesis; selenocysteinyl-tRNA(Sec) biosynthesis; L-seryl-tRNA(Sec) from L-serine and tRNA(Sec): step 1/1. Catalyzes the attachment of serine to tRNA(Ser). Is also able to aminoacylate tRNA(Sec) with serine, to form the misacylated tRNA L-seryl-tRNA(Sec), which will be further converted into selenocysteinyl-tRNA(Sec). The polypeptide is Serine--tRNA ligase (Leptospira borgpetersenii serovar Hardjo-bovis (strain JB197)).